Here is a 1199-residue protein sequence, read N- to C-terminus: AP-3 complex subunit delta-1 (1199 aa).

A2 is subject to N-acetylalanine. HEAT repeat units follow at residues 34 to 71 (KYIS…LGYD), 142 to 179 (DLAR…KYPE), 180 to 216 (SLRP…RNPK), 218 to 254 (YLSL…LEPR), 257 to 296 (KKLI…GMPN), 298 to 336 (SASI…THPK), 337 to 373 (SVQS…KKNL), 375 to 409 (EIVK…QSNY), and 521 to 558 (VYVQ…ERLP). Disordered regions lie at residues 623 to 695 (LDAW…RYQD) and 724 to 963 (YVKL…EPIP). Phosphoserine occurs at positions 632, 634, and 636. Composition is skewed to basic and acidic residues over residues 639–651 (EKPK…EEPR) and 665–675 (LARRREARKQE). Residues 659-679 (EEDEEELARRREARKQEQANN) adopt a coiled-coil conformation. S688 is modified (phosphoserine). Residues 722-750 (DQYVKLEEQRRHRQRLEKDKKRKKKEKGK) are a coiled coil. Basic residues predominate over residues 732-754 (RHRQRLEKDKKRKKKEKGKRRHS). A phosphoserine mark is found at S754 and S755. Phosphothreonine is present on T758. S760, S784, and S825 each carry phosphoserine. The segment covering 773–790 (ITEEMPENALPSDEDDKD) has biased composition (acidic residues). Basic and acidic residues predominate over residues 791–836 (PNDPYRALDIDLDKPLADSEKLPVQKHRNAEAVKSPEKEGVLGVEK). A compositionally biased stretch (basic residues) spans 837-846 (KSKKPKKKEK). The stretch at 843-863 (KKEKKTKEREREKKDKKGEDL) forms a coiled coil. The segment covering 847 to 862 (KTKEREREKKDKKGED) has biased composition (basic and acidic residues). Residues 870–880 (TPPPAAAPIPA) show a composition bias toward pro residues. Residues 894 to 916 (PKDECEVLKGEEEDHVDHDQERK) show a composition bias toward basic and acidic residues. A coiled-coil region spans residues 911 to 934 (HDQERKSSRHKKKKHRKEKEKEER). Positions 917–928 (SSRHKKKKHRKE) are enriched in basic residues.

Belongs to the adaptor complexes large subunit family. As to quaternary structure, adaptor protein complex 3 (AP-3) is a heterotetramer composed of two large adaptins (delta-type subunit AP3D1 and beta-type subunit AP3B1 or AP3B2), a medium adaptin (mu-type subunit AP3M1 or AP3M2) and a small adaptin (sigma-type subunit APS1 or AP3S2). AP-3 associates with the BLOC-1 complex. Interacts with SLC30A2. Interacts with CLN3 (via dileucine motif); this interaction facilitates lysosomal targeting.

It is found in the cytoplasm. Its subcellular location is the golgi apparatus membrane. Part of the AP-3 complex, an adaptor-related complex which is not clathrin-associated. The complex is associated with the Golgi region as well as more peripheral structures. It facilitates the budding of vesicles from the Golgi membrane and may be directly involved in trafficking to lysosomes. Involved in process of CD8+ T-cell and NK cell degranulation. In concert with the BLOC-1 complex, AP-3 is required to target cargos into vesicles assembled at cell bodies for delivery into neurites and nerve terminals. The polypeptide is AP-3 complex subunit delta-1 (Ap3d1) (Mus musculus (Mouse)).